Reading from the N-terminus, the 337-residue chain is MSNGYEDHMDDVCRDDIGRTNLIVNYLPQNMTQDELRSLFSSIGEVESAKLIRDKVAGFEMRSSSLSKGHSLGYGFVNYLNAKDAERAINTLNGLRLQSKTIKVSFARPSSESIKDANLYISGLPRTMTQKDVEDMFLPFGHIINSRVLVDQATGLSRGVAFIRFDKRSEAEEAIASFNGHKPPGSSEPITVKFAANPNQNKNVALLSQICHSPARRFGGPVHHQAQRFRFSPMGVDHMSSISSVNVASSATSGWCIFVYNLGQDADEGILWQMFGPFGAVTNVKVIRDFNTNKCKGFGFVTMTNYEEAAMAIASLNGYRLGDKTLQVSFKTSKSHK.

RRM domains lie at 20 to 109, 117 to 197, and 255 to 333; these read TNLI…FARP, ANLY…FAAN, and WCIF…FKTS.

The protein belongs to the RRM elav family. In terms of assembly, interacts (via RRM3) with cirbp. Unable to form oligomers. Part of a ribonucleoprotein (RNP) complex, at least composed of elavl1/elrA and/or elavl2/elrB, igf2bp3/vg1RBP, ddx6/Xp54, ybx2/frgy2, lsm14b/rap55b and, in a subset of RNP complexes, stau1/staufen. In terms of tissue distribution, ubiquitously expressed in adults.

It is found in the cytoplasm. It localises to the cell cortex. In terms of biological role, RNA-binding protein that binds to the 3'-UTR region of mRNAs and increases their stability. Involved in embryonic stem cells (ESCs) differentiation: preferentially binds mRNAs that are not methylated by N6-methyladenosine (m6A), stabilizing them, promoting ESCs differentiation. Binds to poly-U elements and AU-rich elements (AREs) in the 3'-UTR of target mRNAs. May be involved in cytoplasmic mRNA polyadenylation. Acts cooperatively with cribp to stabilize AU-rich sequence (ARE)-containing mRNAs. May play a role during gastrulation. Required for the vegetal localization of vg1 mRNA. The polypeptide is ELAV-like protein 1-A (elavl1-a) (Xenopus laevis (African clawed frog)).